Here is a 281-residue protein sequence, read N- to C-terminus: Bifunctional protein FolD (281 aa).

NADP(+) is bound by residues Gly-165–Gly-167, Thr-192, and Val-233.

The protein belongs to the tetrahydrofolate dehydrogenase/cyclohydrolase family. As to quaternary structure, homodimer.

The enzyme catalyses (6R)-5,10-methylene-5,6,7,8-tetrahydrofolate + NADP(+) = (6R)-5,10-methenyltetrahydrofolate + NADPH. It carries out the reaction (6R)-5,10-methenyltetrahydrofolate + H2O = (6R)-10-formyltetrahydrofolate + H(+). Its pathway is one-carbon metabolism; tetrahydrofolate interconversion. Functionally, catalyzes the oxidation of 5,10-methylenetetrahydrofolate to 5,10-methenyltetrahydrofolate and then the hydrolysis of 5,10-methenyltetrahydrofolate to 10-formyltetrahydrofolate. The chain is Bifunctional protein FolD from Mycolicibacterium paratuberculosis (strain ATCC BAA-968 / K-10) (Mycobacterium paratuberculosis).